Reading from the N-terminus, the 155-residue chain is MTFLFLILVFIIEILQLSVFPPIFGNAYIVPSLAFLLVLFSSYKIKEKALLLAFLSGLFYDAVVNFLGFISLLNVVFTYLYLVLNNILFVKNPKVEVFLIMPLILLLRKLTIFLVVNTKFPLNIGLKDFGVVLLIDLIFLILLYKVFNKYVYEKA.

4 helical membrane-spanning segments follow: residues 2-24, 62-84, 97-116, and 131-148; these read TFLF…PPIF, AVVN…YLVL, VFLI…FLVV, and VVLL…KVFN.

The protein resides in the cell membrane. This is an uncharacterized protein from Aquifex aeolicus (strain VF5).